We begin with the raw amino-acid sequence, 129 residues long: uncharacterized protein (129 aa).

A compositionally biased stretch (low complexity) spans 1-13 (MSDVAETVVAQEP). The segment at 1 to 129 (MSDVAETVVA…SGDAPAVAAE (129 aa)) is disordered. The segment covering 34–94 (IDEKTSEQNG…KRVSSAHEEA (61 aa)) has biased composition (basic and acidic residues). Over residues 117-129 (VAASGDAPAVAAE) the composition is skewed to low complexity.

This is an uncharacterized protein from Caenorhabditis elegans.